The following is a 359-amino-acid chain: Peptide chain release factor 1 (359 aa).

At Gln236 the chain carries N5-methylglutamine.

Belongs to the prokaryotic/mitochondrial release factor family. In terms of processing, methylated by PrmC. Methylation increases the termination efficiency of RF1.

Its subcellular location is the cytoplasm. Functionally, peptide chain release factor 1 directs the termination of translation in response to the peptide chain termination codons UAG and UAA. The protein is Peptide chain release factor 1 of Streptococcus pneumoniae (strain Hungary19A-6).